The sequence spans 1702 residues: Dicer-like protein 4 (1702 aa).

Disordered regions lie at residues 1–52 (MRDE…SAAT) and 89–120 (SSSSVSSFSSSSSSLFSAAGTDDPSPKMEKDP). Basic and acidic residues predominate over residues 17-31 (GKRDREQKNCEEEKN). The span at 89–105 (SSSSVSSFSSSSSSLFS) shows a compositional bias: low complexity. The region spanning 131-307 (LCKKATEENV…SENLSKSINS (177 aa)) is the Helicase ATP-binding domain. Residue 144–151 (LGTGCGKT) coordinates ATP. The short motif at 251 to 254 (DECH) is the DECH box element. In terms of domain architecture, Helicase C-terminal spans 475-629 (QLIKILSVFR…RMNLEITYRS (155 aa)). One can recognise a Dicer dsRNA-binding fold domain in the interval 656–748 (SISLLYKYCS…LPDSKDEIED (93 aa)). A PAZ domain is found at 932 to 1054 (LVEDIFPPSG…IPPELSHLKI (123 aa)). RNase III domains are found at residues 1083-1251 (ELKH…VDSG) and 1292-1436 (LETL…LDCG). The Mg(2+) site is built by Glu1330, Asp1422, and Glu1425. 2 DRBM domains span residues 1462-1528 (SPIK…NLKA) and 1621-1697 (TAKS…CLKH).

It belongs to the helicase family. Dicer subfamily. As to quaternary structure, interacts with DRB4. Requires Mg(2+) as cofactor. Mn(2+) serves as cofactor.

It localises to the nucleus. Functionally, ribonuclease (RNase) III involved in RNA-mediated post-transcriptional gene silencing (PTGS). Functions in the biogenesis of trans-acting small interfering RNAs (ta-siRNAs, derived from the TAS1, TAS2 or TAS3 endogenous transcripts) by cleaving small dsRNAs into 21-24 nucleotide ta-siRNAs. Functions with the dsRNA-binding protein DRB4 in ta-siRNAs processing. Acts in the RDR6/SGS3/DCL4/AGO7 ta-siRNA pathway involved in leaf developmental timing. Plays a role in transitive silencing of transgenes by processing secondary siRNAs. This pathway, which requires DCL2 and RDR6, amplifies silencing by using the target RNA as substrate to generate secondary siRNAs, providing an efficient mechanism for long-distance silencing. Required for the production of the 30-40 nucleotide bacterial-induced long siRNAs (lsiRNA). May participate with DCL3 in the production of 24 nucleotide repeat-associated siRNAs (ra-siRNAs) which derive from heterochromatin and DNA repeats such as transposons. Plays an important role in antiviral RNA silencing. Involved in the production of viral siRNAs derived from the cucumber mosaic virus (CMV), turnip crinkle virus (TCV) and tobacco rattle virus (TRV). Targeted by the viral silencing suppressor (VSR) protein 2b of the cucumber mosaic virus (CMV) that inactivates DCL4 function in RNA silencing. Does not seem to be involved in microRNAs (miRNAs) processing. The sequence is that of Dicer-like protein 4 (DCL4) from Arabidopsis thaliana (Mouse-ear cress).